Reading from the N-terminus, the 84-residue chain is Cytochrome b559 subunit alpha (84 aa).

Residues 21 to 35 (VIHSITIPSLFIAGW) traverse the membrane as a helical segment. H23 provides a ligand contact to heme.

It belongs to the PsbE/PsbF family. As to quaternary structure, heterodimer of an alpha subunit and a beta subunit. PSII is composed of 1 copy each of membrane proteins PsbA, PsbB, PsbC, PsbD, PsbE, PsbF, PsbH, PsbI, PsbJ, PsbK, PsbL, PsbM, PsbT, PsbX, PsbY, PsbZ, Psb30/Ycf12, at least 3 peripheral proteins of the oxygen-evolving complex and a large number of cofactors. It forms dimeric complexes. It depends on heme b as a cofactor.

It is found in the plastid membrane. Functionally, this b-type cytochrome is tightly associated with the reaction center of photosystem II (PSII). PSII is a light-driven water:plastoquinone oxidoreductase that uses light energy to abstract electrons from H(2)O, generating O(2) and a proton gradient subsequently used for ATP formation. It consists of a core antenna complex that captures photons, and an electron transfer chain that converts photonic excitation into a charge separation. This Cuscuta gronovii (Common dodder) protein is Cytochrome b559 subunit alpha.